The following is a 441-amino-acid chain: Ribulose bisphosphate carboxylase large chain (441 aa).

Lys5 bears the N6,N6,N6-trimethyllysine mark. Residues Asn114 and Thr164 each coordinate substrate. Lys166 acts as the Proton acceptor in catalysis. Position 168 (Lys168) interacts with substrate. Mg(2+) contacts are provided by Lys192, Asp194, and Glu195. Lys192 carries the N6-carboxylysine modification. Catalysis depends on His285, which acts as the Proton acceptor. 3 residues coordinate substrate: Arg286, His318, and Ser370.

Belongs to the RuBisCO large chain family. Type I subfamily. As to quaternary structure, heterohexadecamer of 8 large chains and 8 small chains; disulfide-linked. The disulfide link is formed within the large subunit homodimers. Mg(2+) serves as cofactor. The disulfide bond which can form in the large chain dimeric partners within the hexadecamer appears to be associated with oxidative stress and protein turnover.

It is found in the plastid. Its subcellular location is the chloroplast. It carries out the reaction 2 (2R)-3-phosphoglycerate + 2 H(+) = D-ribulose 1,5-bisphosphate + CO2 + H2O. The catalysed reaction is D-ribulose 1,5-bisphosphate + O2 = 2-phosphoglycolate + (2R)-3-phosphoglycerate + 2 H(+). Functionally, ruBisCO catalyzes two reactions: the carboxylation of D-ribulose 1,5-bisphosphate, the primary event in carbon dioxide fixation, as well as the oxidative fragmentation of the pentose substrate in the photorespiration process. Both reactions occur simultaneously and in competition at the same active site. The protein is Ribulose bisphosphate carboxylase large chain of Pellaea andromedifolia (Coffee fern).